The primary structure comprises 343 residues: Cytosolic Fe-S cluster assembly factor CFD1 (343 aa).

Residue glycine 15–serine 22 coordinates ATP. Composition is skewed to polar residues over residues proline 80–alanine 91 and glutamate 99–glutamine 110. The segment at proline 80–glutamine 110 is disordered. Residues cysteine 241 and cysteine 244 each coordinate [4Fe-4S] cluster.

Belongs to the Mrp/NBP35 ATP-binding proteins family. NUBP2/CFD1 subfamily. Heterotetramer of 2 NBP35 and 2 CFD1 chains. The cofactor is [4Fe-4S] cluster.

The protein localises to the cytoplasm. Component of the cytosolic iron-sulfur (Fe/S) protein assembly (CIA) machinery. Required for maturation of extramitochondrial Fe-S proteins. The NBP35-CFD1 heterotetramer forms a Fe-S scaffold complex, mediating the de novo assembly of an Fe-S cluster and its transfer to target apoproteins. In Coccidioides immitis (strain RS) (Valley fever fungus), this protein is Cytosolic Fe-S cluster assembly factor CFD1.